The following is a 197-amino-acid chain: MAKVLVLKSSILGDYSQSSALIGHLMSHWQQQGAQMTVRDLAADPVPVLDGEIATGMRGGDNLSPRQQQVLDLSDELIAELKSHDTLVIAAPMYNFSIPTQLKNWIDLIARAGVTFTYTETGPKGLLEGKRAVVVTTRGGMHKEGASDHIVPYLKTVLGFIGITEVEFVYAEALNMGPDATAQGLLEAKTALDSLTA.

FMN is bound by residues serine 10, 16-18, 93-96, and 137-140; these read SQS, MYNF, and TRGG.

The protein belongs to the azoreductase type 1 family. In terms of assembly, homodimer. FMN serves as cofactor.

It carries out the reaction 2 a quinone + NADH + H(+) = 2 a 1,4-benzosemiquinone + NAD(+). It catalyses the reaction N,N-dimethyl-1,4-phenylenediamine + anthranilate + 2 NAD(+) = 2-(4-dimethylaminophenyl)diazenylbenzoate + 2 NADH + 2 H(+). Quinone reductase that provides resistance to thiol-specific stress caused by electrophilic quinones. Functionally, also exhibits azoreductase activity. Catalyzes the reductive cleavage of the azo bond in aromatic azo compounds to the corresponding amines. This chain is FMN-dependent NADH:quinone oxidoreductase, found in Shewanella denitrificans (strain OS217 / ATCC BAA-1090 / DSM 15013).